The sequence spans 398 residues: Nicotinate phosphoribosyltransferase (398 aa).

His214 carries the phosphohistidine; by autocatalysis modification.

This sequence belongs to the NAPRTase family. Post-translationally, transiently phosphorylated on a His residue during the reaction cycle. Phosphorylation strongly increases the affinity for substrates and increases the rate of nicotinate D-ribonucleotide production. Dephosphorylation regenerates the low-affinity form of the enzyme, leading to product release.

The enzyme catalyses nicotinate + 5-phospho-alpha-D-ribose 1-diphosphate + ATP + H2O = nicotinate beta-D-ribonucleotide + ADP + phosphate + diphosphate. Its pathway is cofactor biosynthesis; NAD(+) biosynthesis; nicotinate D-ribonucleotide from nicotinate: step 1/1. Functionally, catalyzes the synthesis of beta-nicotinate D-ribonucleotide from nicotinate and 5-phospho-D-ribose 1-phosphate at the expense of ATP. The polypeptide is Nicotinate phosphoribosyltransferase (Xanthomonas campestris pv. campestris (strain B100)).